We begin with the raw amino-acid sequence, 439 residues long: DNA damage-inducible protein 1 (439 aa).

The region spanning 1–82 (MQITIAIQDT…LALHVRETQR (82 aa)) is the Ubiquitin-like domain. The interval 82–101 (RATAVPESQQGRPAAPPQQD) is disordered. Asp-220 is a catalytic residue. The tract at residues 333 to 398 (QDEPTIEGPG…PAPRAPQARS (66 aa)) is disordered. Low complexity-rich tracts occupy residues 364–375 (GQAGPSTAAQPG) and 383–398 (PASA…QARS). The UBA domain occupies 398 to 438 (SFPREHIEQLVALGADEQKAIRALEATDGNVEYAASLIFEG).

Belongs to the DDI1 family. Binds ubiquitin and polyubiquitinated proteins.

It localises to the cytoplasm. Probable aspartic protease. May be involved in the regulation of exocytosis. Acts as a linker between the 19S proteasome and polyubiquitinated proteins via UBA domain interactions with ubiquitin for their subsequent degradation. Required for S-phase checkpoint control. This is DNA damage-inducible protein 1 (ddi-1) from Neurospora crassa (strain ATCC 24698 / 74-OR23-1A / CBS 708.71 / DSM 1257 / FGSC 987).